Reading from the N-terminus, the 293-residue chain is Probable endonuclease 4 (293 aa).

His78, His118, Glu154, Asp188, His191, His225, Asp238, His240, and Glu270 together coordinate Zn(2+).

It belongs to the AP endonuclease 2 family. Zn(2+) is required as a cofactor.

It catalyses the reaction Endonucleolytic cleavage to 5'-phosphooligonucleotide end-products.. Functionally, endonuclease IV plays a role in DNA repair. It cleaves phosphodiester bonds at apurinic or apyrimidinic (AP) sites, generating a 3'-hydroxyl group and a 5'-terminal sugar phosphate. This is Probable endonuclease 4 from Vibrio vulnificus (strain YJ016).